The following is a 117-amino-acid chain: Ribonuclease P protein component (117 aa).

The protein belongs to the RnpA family. As to quaternary structure, consists of a catalytic RNA component (M1 or rnpB) and a protein subunit.

The enzyme catalyses Endonucleolytic cleavage of RNA, removing 5'-extranucleotides from tRNA precursor.. Its function is as follows. RNaseP catalyzes the removal of the 5'-leader sequence from pre-tRNA to produce the mature 5'-terminus. It can also cleave other RNA substrates such as 4.5S RNA. The protein component plays an auxiliary but essential role in vivo by binding to the 5'-leader sequence and broadening the substrate specificity of the ribozyme. This chain is Ribonuclease P protein component, found in Nocardioides sp. (strain ATCC BAA-499 / JS614).